The following is a 752-amino-acid chain: Endo-1,4-beta-xylanase 3 (752 aa).

The tract at residues 1–22 is disordered; it reads MEKNTNTNHTSDDNNDKNHTNE. Positions 10 to 22 are enriched in basic and acidic residues; that stretch reads TSDDNNDKNHTNE. 2 CBM-cenC domains span residues 26 to 163 and 197 to 344; these read KIIL…EGPP and NIVE…VQGP. The region spanning 397 to 692 is the GH10 domain; the sequence is FPYIVKVKQT…NEAGKRFLEV (296 aa). Glu-526 serves as the catalytic Proton donor. The Nucleophile role is filled by Glu-627.

This sequence belongs to the glycosyl hydrolase 10 (cellulase F) family. In terms of tissue distribution, confined to immature xylems.

It carries out the reaction Endohydrolysis of (1-&gt;4)-beta-D-xylosidic linkages in xylans.. Its pathway is glycan degradation; xylan degradation. Its function is as follows. Binds to and hydrolyzes insoluble and soluble xylan substrates. The sequence is that of Endo-1,4-beta-xylanase 3 from Arabidopsis thaliana (Mouse-ear cress).